A 464-amino-acid chain; its full sequence is Adenosylhomocysteinase (464 aa).

The substrate site is built by T56, D131, and E190. 191–193 serves as a coordination point for NAD(+); it reads TTT. Residues K220 and D224 each coordinate substrate. Residues N225, 254–259, E277, N312, 333–335, and N378 contribute to the NAD(+) site; these read GFGDVG and IGH.

Belongs to the adenosylhomocysteinase family. The cofactor is NAD(+).

Its subcellular location is the cytoplasm. It catalyses the reaction S-adenosyl-L-homocysteine + H2O = L-homocysteine + adenosine. It participates in amino-acid biosynthesis; L-homocysteine biosynthesis; L-homocysteine from S-adenosyl-L-homocysteine: step 1/1. Its function is as follows. May play a key role in the regulation of the intracellular concentration of adenosylhomocysteine. This is Adenosylhomocysteinase from Zymomonas mobilis subsp. mobilis (strain ATCC 31821 / ZM4 / CP4).